The primary structure comprises 437 residues: Elongation factor 1-alpha (437 aa).

In terms of domain architecture, tr-type G spans 4-229 (KPHMNLVVIG…DQLQPPAKPV (226 aa)). The tract at residues 13–20 (GHVDHGKS) is G1. 13-20 (GHVDHGKS) provides a ligand contact to GTP. S20 is a binding site for Mg(2+). The tract at residues 69-73 (GITID) is G2. The interval 90-93 (DAPG) is G3. GTP contacts are provided by residues 90-94 (DAPGH) and 152-155 (NKMD). The interval 152–155 (NKMD) is G4. A G5 region spans residues 193–195 (SAW).

This sequence belongs to the TRAFAC class translation factor GTPase superfamily. Classic translation factor GTPase family. EF-Tu/EF-1A subfamily.

It localises to the cytoplasm. The enzyme catalyses GTP + H2O = GDP + phosphate + H(+). Functionally, GTP hydrolase that promotes the GTP-dependent binding of aminoacyl-tRNA to the A-site of ribosomes during protein biosynthesis. The sequence is that of Elongation factor 1-alpha from Aeropyrum pernix (strain ATCC 700893 / DSM 11879 / JCM 9820 / NBRC 100138 / K1).